The sequence spans 341 residues: MPKRKVTFQGVGDEEDEDEIIVPKKKLVDPVAGSGGPGSRFKGKHSLDSDEEEDDDDGGSSKYDILASEDVEGQEAATLPSEGGVRITPFNLQEEMEEGHFDADGNYFLNRDAQIRDSWLDNIDWVKIRERPPGQRQASDSEEEDSLGQTSMSAQALLEGLLELLLPRETVAGALRRLGARGGGKGRKGPGQPSSPQRLDRLSGLADQMVARGNLGVYQETRERLAMRLKGLGCQTLGPHNPTPPPSLDMFAEELAEEELETPTPTQRGEAESRGDGLVDVMWEYKWENTGDAELYGPFTSAQMQTWVSEGYFPDGVYCRKLDPPGGQFYNSKRIDFDLYT.

The interval 1 to 66 is disordered; the sequence is MPKRKVTFQG…DGGSSKYDIL (66 aa). A Glycyl lysine isopeptide (Lys-Gly) (interchain with G-Cter in SUMO2) cross-link involves residue K26. K44 is subject to N6-acetyllysine. 3 positions are modified to phosphoserine: S46, S49, and S118. Positions 49-58 are enriched in acidic residues; the sequence is SDEEEDDDDG. 2 disordered regions span residues 131–151 and 178–199; these read RPPG…GQTS and LGAR…PQRL. Phosphoserine is present on residues S194 and S195. Residues 280 to 338 form the GYF domain; it reads DVMWEYKWENTGDAELYGPFTSAQMQTWVSEGYFPDGVYCRKLDPPGGQFYNSKRIDFD.

Component of the U5 snRNP complex composed of the U5 snRNA and at least PRPF6, PRPF8, SNRNP200, EFTUD2, SNRNP40, DDX23, TXNL4A and CD2BP2. Interacts directly with TXNL4A and PRPF6. Interacts (via GYF domain) with CD2 (via Pro-rich sequence in the cytoplasmic domain). Interacts with PQBP1.

The protein resides in the cytoplasm. Its subcellular location is the nucleus. Its function is as follows. Involved in pre-mRNA splicing as component of the U5 snRNP complex that is involved in spliceosome assembly. The chain is CD2 antigen cytoplasmic tail-binding protein 2 (CD2BP2) from Homo sapiens (Human).